Reading from the N-terminus, the 331-residue chain is Type 2 lactosamine alpha-2,3-sialyltransferase (331 aa).

Residues methionine 1 to tyrosine 4 lie on the Cytoplasmic side of the membrane. Residues leucine 5–glycine 25 form a helical; Signal-anchor for type II membrane protein membrane-spanning segment. Over threonine 26–aspartate 331 the chain is Lumenal. N-linked (GlcNAc...) asparagine glycans are attached at residues asparagine 129, asparagine 181, asparagine 282, asparagine 295, asparagine 308, and asparagine 327.

Belongs to the glycosyltransferase 29 family.

It is found in the golgi apparatus membrane. The catalysed reaction is a neolactoside nLc4Cer(d18:1(4E)) + CMP-N-acetyl-beta-neuraminate = a neolactoside IV(3)-alpha-NeuAc-nLc4Cer(d18:1(4E)) + CMP + H(+). It catalyses the reaction a beta-D-galactosyl-(1-&gt;4)-N-acetyl-beta-D-glucosaminyl derivative + CMP-N-acetyl-beta-neuraminate = an N-acetyl-alpha-neuraminyl-(2-&gt;3)-beta-D-galactosyl-(1-&gt;4)-N-acetyl-beta-D-glucosaminyl derivative + CMP + H(+). It carries out the reaction a neolactoside nLc6Cer(d18:1(4E)) + CMP-N-acetyl-beta-neuraminate = a neolactoside VI(3)-alpha-NeuNAc-nLc6Cer(d18:1(4E)) + CMP + H(+). Transfers the sialyl residue from CMP-N-acetyl-beta-neuraminate to the terminal galactose residue on sugar chains of glycoproteins and glycolipids. It's alpha-2,3-sialyltransferase activity is specific toward type II glycan chains (Galbeta1-4GlcNAc) on glycoproteins and glycolipids such as neolactosides nLc4Cer and nLc6Cer, whose sialyl-products serve as precursors for the Lewis X antigen. Critically involved in the synthesis of functional selectin ligands needed for neutrophil recruitment during inflammation and lymphocyte homing to the lymph nodes. This is Type 2 lactosamine alpha-2,3-sialyltransferase (ST3GAL6) from Pan troglodytes (Chimpanzee).